The primary structure comprises 384 residues: L-aspartate decarboxylase (384 aa).

Residue Lys231 is modified to N6-(pyridoxal phosphate)lysine.

This sequence belongs to the group II decarboxylase family. MfnA subfamily. As to quaternary structure, homodimer. Can also form homohexamers. Pyridoxal 5'-phosphate serves as cofactor.

The catalysed reaction is L-aspartate + H(+) = beta-alanine + CO2. The protein operates within cofactor biosynthesis; coenzyme A biosynthesis. With respect to regulation, inhibited by hydroxylamine. Its function is as follows. Catalyzes the decarboxylation of L-aspartate to produce beta-alanine. In vitro, can also catalyze the decarboxylation of L-glutamate to produce 4-aminobutanoate, but this activity does not seem necessary in vivo. Shows much higher activity with L-aspartate than with L-glutamate. Does not decarboxylate L-tyrosine. The protein is L-aspartate decarboxylase of Thermococcus kodakarensis (strain ATCC BAA-918 / JCM 12380 / KOD1) (Pyrococcus kodakaraensis (strain KOD1)).